Consider the following 187-residue polypeptide: UPF0200 protein MM_1313 (187 aa).

9-16 (GMPASGKS) contributes to the ATP binding site.

The protein belongs to the UPF0200 family.

The polypeptide is UPF0200 protein MM_1313 (Methanosarcina mazei (strain ATCC BAA-159 / DSM 3647 / Goe1 / Go1 / JCM 11833 / OCM 88) (Methanosarcina frisia)).